A 305-amino-acid polypeptide reads, in one-letter code: tRNA dimethylallyltransferase (305 aa).

8–15 (GPTAVGKT) serves as a coordination point for ATP. Position 10–15 (10–15 (TAVGKT)) interacts with substrate. Residues 33 to 36 (DSRQ) are interaction with substrate tRNA.

Belongs to the IPP transferase family. Monomer. Mg(2+) serves as cofactor.

The catalysed reaction is adenosine(37) in tRNA + dimethylallyl diphosphate = N(6)-dimethylallyladenosine(37) in tRNA + diphosphate. Catalyzes the transfer of a dimethylallyl group onto the adenine at position 37 in tRNAs that read codons beginning with uridine, leading to the formation of N6-(dimethylallyl)adenosine (i(6)A). This chain is tRNA dimethylallyltransferase, found in Thermotoga neapolitana (strain ATCC 49049 / DSM 4359 / NBRC 107923 / NS-E).